The primary structure comprises 333 residues: Acetyltransferase Pat (333 aa).

3',5'-cyclic AMP-binding positions include 85–88 (GEIA), 95–96 (RT), and R135. The 165-residue stretch at 153 to 317 (FYLRPVLPGD…DTVPFEPELI (165 aa)) folds into the N-acetyltransferase domain. E211 contacts Mg(2+). Substrate contacts are provided by residues 237-239 (FTV), 245-250 (GRGIGS), N276, and R285.

In terms of assembly, homodimer. Mg(2+) serves as cofactor.

Its activity is regulated as follows. Allosterically regulated by cAMP. In terms of biological role, catalyzes specifically the acetylation of the epsilon-amino group of a highly conserved lysine residue in acetyl-CoA synthetase (ACS) and of the universal stress protein (USP) MSMEG_4207. Acetylation results in the inactivation of ACS activity and could be important for mycobacteria to adjust to environmental changes. The polypeptide is Acetyltransferase Pat (Mycolicibacterium smegmatis (strain ATCC 700084 / mc(2)155) (Mycobacterium smegmatis)).